The chain runs to 188 residues: MSKLSEIEALLFVAGEDGLKVRQIAEILSIPPTGVSQSLEKLTAKYEADADCSLALLETSNTYKLVTKQAFAELLRAYSKSPINQSLSRAALETLSIIAYKQPITRVEIDDIRGVNSSGALAKLLAFELVREDGKKEVLGRPNLYVTTEYFLDYMGINHLEELPVVTDTELVAEESQLFGQATESELE.

The protein belongs to the ScpB family. Homodimer. Homodimerization may be required to stabilize the binding of ScpA to the Smc head domains. Component of a cohesin-like complex composed of ScpA, ScpB and the Smc homodimer, in which ScpA and ScpB bind to the head domain of Smc. The presence of the three proteins is required for the association of the complex with DNA.

The protein resides in the cytoplasm. In terms of biological role, participates in chromosomal partition during cell division. May act via the formation of a condensin-like complex containing Smc and ScpA that pull DNA away from mid-cell into both cell halves. This chain is Segregation and condensation protein B, found in Streptococcus gordonii (strain Challis / ATCC 35105 / BCRC 15272 / CH1 / DL1 / V288).